A 372-amino-acid chain; its full sequence is O-glycoside alpha-1,2-mannosyltransferase homolog 2 (372 aa).

Topologically, residues 1-6 (MRISRL) are cytoplasmic. The helical; Signal-anchor for type II membrane protein transmembrane segment at 7-27 (LIRVLLGFVILFITYILFPSI) threads the bilayer. Topologically, residues 28–372 (PKALVNTLNV…NLTNEDYDEL (345 aa)) are lumenal. Glu-271 functions as the Nucleophile in the catalytic mechanism.

The protein belongs to the glycosyltransferase 15 family.

The protein localises to the endoplasmic reticulum membrane. In terms of biological role, probable mannosyltransferase involved in O-glycosylation of cell wall and secreted proteins. This Schizosaccharomyces pombe (strain 972 / ATCC 24843) (Fission yeast) protein is O-glycoside alpha-1,2-mannosyltransferase homolog 2 (omh2).